Consider the following 185-residue polypeptide: Anterior gradient protein 2 (185 aa).

Positions 1 to 18 are cleaved as a signal peptide; sequence MQTGLSLACLVLLCSVLG. Residues 25–45 form a disordered region; sequence PKRQAGATDTNGAAKSEPAPV.

Belongs to the AGR family. In terms of tissue distribution, expressed in the anterior of the dorsal ectoderm from late gastrula stages onwards. Becomes restricted to the cement gland anlage at the onset of neurulation (stages 13 to 14) and expressed exclusively in the cement gland from stage 18 onwards, with transient expression in the hatching gland during tailbud stages.

The protein localises to the secreted. Involved in cement gland formation; probably specifies dorsal ectoderm to acquire an anterior fate such as cement gland and forebrain. Signals via the FGF pathway. The chain is Anterior gradient protein 2 (ag2) from Xenopus laevis (African clawed frog).